A 394-amino-acid polypeptide reads, in one-letter code: Elongation factor Tu 2 (394 aa).

One can recognise a tr-type G domain in the interval 10–204 (KPHVNVGTIG…YLDSYIPEPE (195 aa)). The interval 19-26 (GHVDHGKT) is G1. Residue 19 to 26 (GHVDHGKT) coordinates GTP. Threonine 26 contributes to the Mg(2+) binding site. Residues 60–64 (GITIN) form a G2 region. The interval 81 to 84 (DCPG) is G3. GTP-binding positions include 81-85 (DCPGH) and 136-139 (NKCD). A G4 region spans residues 136 to 139 (NKCD). A G5 region spans residues 174-176 (SAL).

It belongs to the TRAFAC class translation factor GTPase superfamily. Classic translation factor GTPase family. EF-Tu/EF-1A subfamily. As to quaternary structure, monomer.

It is found in the cytoplasm. It carries out the reaction GTP + H2O = GDP + phosphate + H(+). Its function is as follows. GTP hydrolase that promotes the GTP-dependent binding of aminoacyl-tRNA to the A-site of ribosomes during protein biosynthesis. This chain is Elongation factor Tu 2, found in Serratia proteamaculans (strain 568).